The sequence spans 498 residues: Heat stress transcription factor A-3 (498 aa).

Residues 156-180 form a disordered region; that stretch reads RRRSSPTQQSGLQPGSSGESGLDPE. Polar residues predominate over residues 160 to 174; sequence SPTQQSGLQPGSSGE. Residues 180–235 are a coiled coil; the sequence is ELNTLRREKSALLQEVTRLKQEHLQTIEQMSTLNQRLESAEDRQKQMVSFLAKLLQ. The interval 184–234 is hydrophobic repeat HR-A/B; sequence LRREKSALLQEVTRLKQEHLQTIEQMSTLNQRLESAEDRQKQMVSFLAKLL. A Nuclear localization signal motif is present at residues 258-263; sequence KRKFLK. Positions 263 to 291 are disordered; that stretch reads KHVPHGNIDSGESSSQHTGESNLDFSPTS. Residues 272–291 show a composition bias toward polar residues; sequence SGESSSQHTGESNLDFSPTS. Positions 309–316 match the Nuclear export signal motif; it reads LEDGDLNL. The segment at 356–382 is disordered; sequence LEIPPASGPRGQDPTIGRSKGKNVLSP.

The protein belongs to the HSF family. Class A subfamily. As to quaternary structure, homotrimer. Exhibits temperature-dependent phosphorylation.

The protein localises to the cytoplasm. The protein resides in the nucleus. Its function is as follows. Transcriptional regulator that specifically binds DNA of heat shock promoter elements (HSE). The protein is Heat stress transcription factor A-3 (HSFA3) of Oryza sativa subsp. japonica (Rice).